Consider the following 394-residue polypeptide: Maltose permease (394 aa).

Residues M1–A11 lie on the Cytoplasmic side of the membrane. The helical transmembrane segment at R12–L38 threads the bilayer. The Extracellular segment spans residues Q39–S45. The chain crosses the membrane as a helical span at residues G46–T74. At R75–V78 the chain is on the cytoplasmic side. The helical transmembrane segment at G79 to F104 threads the bilayer. The Extracellular portion of the chain corresponds to V105–T108. The helical transmembrane segment at V109–A126 threads the bilayer. At L127–Y137 the chain is on the cytoplasmic side. Residues G138–D160 traverse the membrane as a helical segment. The Extracellular segment spans residues H161 to A163. The helical transmembrane segment at F164 to T183 threads the bilayer. The Cytoplasmic portion of the chain corresponds to R184–L213. The helical transmembrane segment at L214–L233 threads the bilayer. Topologically, residues L234–E237 are extracellular. A helical transmembrane segment spans residues L238–A262. Topologically, residues A263–M272 are cytoplasmic. Residues V273–A292 form a helical membrane-spanning segment. At D293–P295 the chain is on the extracellular side. The helical transmembrane segment at L296–L318 threads the bilayer. Over Q319 to Q330 the chain is Cytoplasmic. A helical transmembrane segment spans residues S331 to E358. Residues R359 to Q361 are Extracellular-facing. Residues I362–L382 traverse the membrane as a helical segment. The Cytoplasmic portion of the chain corresponds to L383–K394.

It belongs to the major facilitator superfamily.

It is found in the cell membrane. Its function is as follows. High affinity transport of maltose. This is Maltose permease (malA) from Geobacillus stearothermophilus (Bacillus stearothermophilus).